The primary structure comprises 729 residues: Transcriptional activator ptaB (729 aa).

Residues 1-12 show a composition bias toward pro residues; it reads MPQHPGLPPGHP. Disordered stretches follow at residues 1 to 69, 207 to 341, 505 to 538, and 614 to 729; these read MPQH…QAHA, AAAA…QNQA, LELS…SLPE, and RGPQ…KGTA. Residues 38-56 are compositionally biased toward low complexity; the sequence is PGGPQVTQGGPMMGMPPGA. The span at 272-285 shows a compositional bias: pro residues; that stretch reads APQPHPTPNPPPQQ. Low complexity-rich tracts occupy residues 286-300 and 307-341; these read LPQA…HQQP and QPQQ…QNQA. Residues 614–625 show a composition bias toward polar residues; the sequence is RGPQMNGPNQFA. The span at 655–671 shows a compositional bias: low complexity; sequence GPPGMVQQGQMQPNVGQ. Polar residues predominate over residues 672 to 682; that stretch reads ATSASASPQVT.

The protein belongs to the MFG1 family. Interacts with somA.

It is found in the nucleus. Its function is as follows. Transcriptional regulator that forms a complex with somA to control biofilm formation. The chain is Transcriptional activator ptaB from Aspergillus fumigatus (strain ATCC MYA-4609 / CBS 101355 / FGSC A1100 / Af293) (Neosartorya fumigata).